A 365-amino-acid chain; its full sequence is Ferredoxin--NADP reductase, chloroplastic (365 aa).

Positions 1 to 22 (MAAAVTAAVSFPSTKSTPLSTR) are disordered. Polar residues predominate over residues 11-22 (FPSTKSTPLSTR). Positions 86-208 (KNPYTGRCLL…TGPVGKEMLM (123 aa)) constitute an FAD-binding FR-type domain. FAD is bound by residues 144-147 (RLYS), 165-167 (CVK), tyrosine 171, 182-184 (VCS), and threonine 223. NADP(+) is bound by residues serine 147 and lysine 167. NADP(+)-binding positions include threonine 223, 255–256 (VP), 285–286 (SR), lysine 295, 324–325 (GL), and glutamate 363.

The protein belongs to the ferredoxin--NADP reductase type 1 family. FAD serves as cofactor.

Its subcellular location is the plastid. The protein localises to the chloroplast stroma. It localises to the chloroplast thylakoid membrane. The catalysed reaction is 2 reduced [2Fe-2S]-[ferredoxin] + NADP(+) + H(+) = 2 oxidized [2Fe-2S]-[ferredoxin] + NADPH. It participates in energy metabolism; photosynthesis. May play a key role in regulating the relative amounts of cyclic and non-cyclic electron flow to meet the demands of the plant for ATP and reducing power. The protein is Ferredoxin--NADP reductase, chloroplastic (PETH) of Mesembryanthemum crystallinum (Common ice plant).